Consider the following 1372-residue polypeptide: DNA-directed RNA polymerase subunit beta (1372 aa).

Belongs to the RNA polymerase beta chain family. As to quaternary structure, the RNAP catalytic core consists of 2 alpha, 1 beta, 1 beta' and 1 omega subunit. When a sigma factor is associated with the core the holoenzyme is formed, which can initiate transcription.

The enzyme catalyses RNA(n) + a ribonucleoside 5'-triphosphate = RNA(n+1) + diphosphate. In terms of biological role, DNA-dependent RNA polymerase catalyzes the transcription of DNA into RNA using the four ribonucleoside triphosphates as substrates. This is DNA-directed RNA polymerase subunit beta from Psychrobacter arcticus (strain DSM 17307 / VKM B-2377 / 273-4).